The chain runs to 210 residues: Ras-related protein RABC2a (210 aa).

20 to 27 (GDSGVGKS) lines the GTP pocket. The Effector region motif lies at 41–49 (LAPTIGVDF). GTP-binding positions include 67-71 (DTAGQ), 127-130 (NKVD), and 157-158 (SA). 2 S-geranylgeranyl cysteine lipidation sites follow: Cys208 and Cys209.

It belongs to the small GTPase superfamily. Rab family. Interacts with XI-2/MYA2.

Its subcellular location is the cell membrane. It localises to the cytoplasm. In terms of biological role, intracellular vesicle trafficking and protein transport. In Arabidopsis thaliana (Mouse-ear cress), this protein is Ras-related protein RABC2a (RABC2A).